The sequence spans 555 residues: CTP synthase (555 aa).

Positions 1 to 265 are amidoligase domain; that stretch reads MTRYIFITGG…GNRVCEKLNI (265 aa). Serine 13 lines the CTP pocket. UTP is bound at residue serine 13. ATP is bound by residues 14–19 and aspartate 71; that span reads SLGKGI. Aspartate 71 and glutamate 139 together coordinate Mg(2+). CTP is bound by residues 146 to 148, 186 to 191, and lysine 222; these read DIE and KTKPTQ. Residues 186–191 and lysine 222 contribute to the UTP site; that span reads KTKPTQ. Residues 290–541 enclose the Glutamine amidotransferase type-1 domain; the sequence is TVAVVGKYVD…IKAGLAAKEA (252 aa). Glycine 351 is an L-glutamine binding site. Cysteine 378 (nucleophile; for glutamine hydrolysis) is an active-site residue. Residues 379-382, glutamate 402, and arginine 469 contribute to the L-glutamine site; that span reads LGMQ. Residues histidine 514 and glutamate 516 contribute to the active site.

Belongs to the CTP synthase family. As to quaternary structure, homotetramer.

The enzyme catalyses UTP + L-glutamine + ATP + H2O = CTP + L-glutamate + ADP + phosphate + 2 H(+). It catalyses the reaction L-glutamine + H2O = L-glutamate + NH4(+). The catalysed reaction is UTP + NH4(+) + ATP = CTP + ADP + phosphate + 2 H(+). It functions in the pathway pyrimidine metabolism; CTP biosynthesis via de novo pathway; CTP from UDP: step 2/2. With respect to regulation, allosterically activated by GTP, when glutamine is the substrate; GTP has no effect on the reaction when ammonia is the substrate. The allosteric effector GTP functions by stabilizing the protein conformation that binds the tetrahedral intermediate(s) formed during glutamine hydrolysis. Inhibited by the product CTP, via allosteric rather than competitive inhibition. Catalyzes the ATP-dependent amination of UTP to CTP with either L-glutamine or ammonia as the source of nitrogen. Regulates intracellular CTP levels through interactions with the four ribonucleotide triphosphates. The sequence is that of CTP synthase from Coxiella burnetii (strain RSA 493 / Nine Mile phase I).